A 190-amino-acid chain; its full sequence is Ribosome maturation factor RimM (190 aa).

The region spanning 114–190 (DDEYYWVDLI…CITVDWQPDY (77 aa)) is the PRC barrel domain.

This sequence belongs to the RimM family. Binds ribosomal protein uS19.

It is found in the cytoplasm. An accessory protein needed during the final step in the assembly of 30S ribosomal subunit, possibly for assembly of the head region. Essential for efficient processing of 16S rRNA. May be needed both before and after RbfA during the maturation of 16S rRNA. It has affinity for free ribosomal 30S subunits but not for 70S ribosomes. This is Ribosome maturation factor RimM from Acidovorax sp. (strain JS42).